The following is a 246-amino-acid chain: Ribonuclease PH (246 aa).

Phosphate contacts are provided by residues R86 and G124–R126.

Belongs to the RNase PH family. Homohexameric ring arranged as a trimer of dimers.

It catalyses the reaction tRNA(n+1) + phosphate = tRNA(n) + a ribonucleoside 5'-diphosphate. Phosphorolytic 3'-5' exoribonuclease that plays an important role in tRNA 3'-end maturation. Removes nucleotide residues following the 3'-CCA terminus of tRNAs; can also add nucleotides to the ends of RNA molecules by using nucleoside diphosphates as substrates, but this may not be physiologically important. Probably plays a role in initiation of 16S rRNA degradation (leading to ribosome degradation) during starvation. In Bacillus licheniformis (strain ATCC 14580 / DSM 13 / JCM 2505 / CCUG 7422 / NBRC 12200 / NCIMB 9375 / NCTC 10341 / NRRL NRS-1264 / Gibson 46), this protein is Ribonuclease PH.